The following is a 109-amino-acid chain: Cysteine-rich venom protein 7 (109 aa).

An N-terminal signal peptide occupies residues 1-21 (MSKVFVIILVALMVAISIASA). Cystine bridges form between Cys30–Cys47, Cys37–Cys52, Cys46–Cys58, Cys70–Cys90, and Cys78–Cys98.

In terms of tissue distribution, expressed by the venom gland.

It localises to the secreted. The protein is Cysteine-rich venom protein 7 of Pimpla hypochondriaca (Parasitoid wasp).